Here is a 300-residue protein sequence, read N- to C-terminus: E3 ubiquitin-protein ligase RNF212B (300 aa).

An RING-type zinc finger spans residues 6-40; sequence CNQCFRKDGAHFFVTSCGHIFCKKCVTLEKCAVCG. The stretch at 87–124 forms a coiled coil; the sequence is LLIAFYKHRITKLETAMQEAQQALVSQDKELSVLRKEN. The disordered stretch occupies residues 141–232; the sequence is YQGSRSITPR…SYRTSSASSG (92 aa). Residues 155–165 are compositionally biased toward polar residues; it reads TSPSQSVTPRP. A compositionally biased stretch (low complexity) spans 166-182; it reads SFQHSSQVVSRSSSAES. The segment covering 191–200 has biased composition (gly residues); the sequence is GSLGQGGRGL. The segment covering 211–232 has biased composition (polar residues); sequence NETPSPASTHSLSYRTSSASSG.

Homodimer. In terms of processing, autoubiquitinated.

The protein localises to the chromosome. It catalyses the reaction S-ubiquitinyl-[E2 ubiquitin-conjugating enzyme]-L-cysteine + [acceptor protein]-L-lysine = [E2 ubiquitin-conjugating enzyme]-L-cysteine + N(6)-ubiquitinyl-[acceptor protein]-L-lysine.. It participates in protein modification; protein ubiquitination. Functionally, ubiquitin E3 ligase that acts as a crucial factor for crossing-over (CO) formation during meiosis. Essential for normal prophase I progression and for ensuring appropriate CO designation in meiosis. Recruits key components of the cross-over machinery either directly ou indirectly, leading to the activation of the MutL-gamma complex. The function of RNF212B in CO designation is dependent on its catalytic activity. This is E3 ubiquitin-protein ligase RNF212B (RNF212B) from Homo sapiens (Human).